Reading from the N-terminus, the 503-residue chain is 26S proteasome non-ATPase regulatory subunit 5 (503 aa).

Residue Ala-2 is modified to N-acetylalanine.

This sequence belongs to the proteasome subunit S5B/HSM3 family. As to quaternary structure, interacts with PSMC1, PSMC2, PSMD1 and PSMD6. Part of transient complex containing PSMD5, PSMC2, PSMC1 and PSMD2 formed during the assembly of the 26S proteasome.

Acts as a chaperone during the assembly of the 26S proteasome, specifically of the base subcomplex of the PA700/19S regulatory complex (RC). In the initial step of the base subcomplex assembly is part of an intermediate PSMD5:PSMC2:PSMC1:PSMD2 module which probably assembles with a PSMD10:PSMC4:PSMC5:PAAF1 module followed by dissociation of PSMD5. In Bos taurus (Bovine), this protein is 26S proteasome non-ATPase regulatory subunit 5 (PSMD5).